We begin with the raw amino-acid sequence, 434 residues long: Glutamate-1-semialdehyde 2,1-aminomutase (434 aa).

Lys-266 is subject to N6-(pyridoxal phosphate)lysine.

It belongs to the class-III pyridoxal-phosphate-dependent aminotransferase family. HemL subfamily. Homodimer. It depends on pyridoxal 5'-phosphate as a cofactor.

The protein localises to the cytoplasm. It catalyses the reaction (S)-4-amino-5-oxopentanoate = 5-aminolevulinate. Its pathway is porphyrin-containing compound metabolism; protoporphyrin-IX biosynthesis; 5-aminolevulinate from L-glutamyl-tRNA(Glu): step 2/2. This Fusobacterium nucleatum subsp. nucleatum (strain ATCC 25586 / DSM 15643 / BCRC 10681 / CIP 101130 / JCM 8532 / KCTC 2640 / LMG 13131 / VPI 4355) protein is Glutamate-1-semialdehyde 2,1-aminomutase.